Consider the following 89-residue polypeptide: Small ribosomal subunit protein bS16 (89 aa).

Belongs to the bacterial ribosomal protein bS16 family.

This Psychrobacter arcticus (strain DSM 17307 / VKM B-2377 / 273-4) protein is Small ribosomal subunit protein bS16.